The primary structure comprises 252 residues: Chaperone protein AggD (252 aa).

An N-terminal signal peptide occupies residues Met-1 to Ala-22.

The protein belongs to the periplasmic pilus chaperone family.

It localises to the periplasm. Its function is as follows. Involved in the biogenesis of the AAF/I fimbriae. This Escherichia coli protein is Chaperone protein AggD (aggD).